Reading from the N-terminus, the 151-residue chain is Protein InSETG-4 (151 aa).

Its subcellular location is the cytoplasm. It localises to the cytosol. This chain is Protein InSETG-4 (InSet4-G), found in Homo sapiens (Human).